We begin with the raw amino-acid sequence, 226 residues long: Urease accessory protein UreF (226 aa).

Belongs to the UreF family. As to quaternary structure, ureD, UreF and UreG form a complex that acts as a GTP-hydrolysis-dependent molecular chaperone, activating the urease apoprotein by helping to assemble the nickel containing metallocenter of UreC. The UreE protein probably delivers the nickel.

It localises to the cytoplasm. In terms of biological role, required for maturation of urease via the functional incorporation of the urease nickel metallocenter. In Burkholderia cenocepacia (strain ATCC BAA-245 / DSM 16553 / LMG 16656 / NCTC 13227 / J2315 / CF5610) (Burkholderia cepacia (strain J2315)), this protein is Urease accessory protein UreF.